A 314-amino-acid chain; its full sequence is 3'-5' exoribonuclease YhaM (314 aa).

A DNA-binding region (OB) is located at residues 22-90; sequence SSTKGIASNG…QLKLRNIRPV (69 aa). Residues 163 to 279 enclose the HD domain; the sequence is HVVSMLNLAK…LHYIDNLDAK (117 aa).

The protein belongs to the YhaM family. It depends on Mn(2+) as a cofactor. Requires Co(2+) as cofactor.

Shows a 3'-5' exoribonuclease activity as well as single-stranded DNA 3'-5'exonuclease activity. Plays a role in the secondary pathway of 23S rRNA 3' end maturation. The sequence is that of 3'-5' exoribonuclease YhaM from Bacillus subtilis (strain 168).